Here is a 102-residue protein sequence, read N- to C-terminus: NADH-quinone oxidoreductase subunit K (102 aa).

The next 3 helical transmembrane spans lie at 5–25 (LSHF…GIIL), 30–50 (IIVV…NLVS), and 62–82 (VFSL…LAIL).

It belongs to the complex I subunit 4L family. NDH-1 is composed of 14 different subunits. Subunits NuoA, H, J, K, L, M, N constitute the membrane sector of the complex.

It is found in the cell inner membrane. The catalysed reaction is a quinone + NADH + 5 H(+)(in) = a quinol + NAD(+) + 4 H(+)(out). Its function is as follows. NDH-1 shuttles electrons from NADH, via FMN and iron-sulfur (Fe-S) centers, to quinones in the respiratory chain. The immediate electron acceptor for the enzyme in this species is believed to be ubiquinone. Couples the redox reaction to proton translocation (for every two electrons transferred, four hydrogen ions are translocated across the cytoplasmic membrane), and thus conserves the redox energy in a proton gradient. The protein is NADH-quinone oxidoreductase subunit K of Methylocella silvestris (strain DSM 15510 / CIP 108128 / LMG 27833 / NCIMB 13906 / BL2).